We begin with the raw amino-acid sequence, 597 residues long: NADH-quinone oxidoreductase subunit C/D (597 aa).

The segment at 1–187 is NADH dehydrogenase I subunit C; sequence MIDENKKKNT…ESFFLDEQKE (187 aa). Positions 211–597 are NADH dehydrogenase I subunit D; that stretch reads DFMFLNLGPN…IDFVMSDVDR (387 aa).

This sequence in the N-terminal section; belongs to the complex I 30 kDa subunit family. The protein in the C-terminal section; belongs to the complex I 49 kDa subunit family. As to quaternary structure, NDH-1 is composed of 13 different subunits. Subunits NuoB, CD, E, F, and G constitute the peripheral sector of the complex.

It is found in the cell inner membrane. It catalyses the reaction a quinone + NADH + 5 H(+)(in) = a quinol + NAD(+) + 4 H(+)(out). NDH-1 shuttles electrons from NADH, via FMN and iron-sulfur (Fe-S) centers, to quinones in the respiratory chain. The immediate electron acceptor for the enzyme in this species is believed to be ubiquinone. Couples the redox reaction to proton translocation (for every two electrons transferred, four hydrogen ions are translocated across the cytoplasmic membrane), and thus conserves the redox energy in a proton gradient. The protein is NADH-quinone oxidoreductase subunit C/D of Buchnera aphidicola subsp. Schizaphis graminum (strain Sg).